The chain runs to 161 residues: Succinate dehydrogenase assembly factor 2, mitochondrial (161 aa).

Residues methionine 1–leucine 31 constitute a mitochondrion transit peptide.

The protein belongs to the SDHAF2 family. Interacts with the flavoprotein subunit within the SDH catalytic dimer.

Its subcellular location is the mitochondrion matrix. Its function is as follows. Plays an essential role in the assembly of succinate dehydrogenase (SDH), an enzyme complex (also referred to as respiratory complex II) that is a component of both the tricarboxylic acid (TCA) cycle and the mitochondrial electron transport chain, and which couples the oxidation of succinate to fumarate with the reduction of ubiquinone (coenzyme Q) to ubiquinol. Required for flavinylation (covalent attachment of FAD) of the flavoprotein subunit of the SDH catalytic dimer. The sequence is that of Succinate dehydrogenase assembly factor 2, mitochondrial from Aedes aegypti (Yellowfever mosquito).